Consider the following 1474-residue polypeptide: Alpha-2-macroglobulin (1474 aa).

The signal sequence occupies residues 1–23 (MGKNKLLHPSLVLLLLVLLPTDA). The cysteines at positions 48 and 86 are disulfide-linked. Asn55 is a glycosylation site (N-linked (GlcNAc...) (complex) asparagine). Asn70 and Asn247 each carry an N-linked (GlcNAc...) asparagine glycan. Disulfide bonds link Cys251–Cys299 and Cys269–Cys287. Asn396 and Asn410 each carry an N-linked (GlcNAc...) asparagine glycan. Disulfide bonds link Cys470/Cys563, Cys595/Cys771, Cys642/Cys689, Cys821/Cys849, Cys847/Cys883, Cys921/Cys1321, Cys1079/Cys1127, and Cys1352/Cys1467. Residues 690–728 (PQLQQYEMHGPEGLRVGFYESDVMGRGHARLVHVEEPHT) are bait region. Residues Gln693 and Gln694 each participate in an isoglutamyl lysine isopeptide (Gln-Lys) (interchain with K-? in other proteins) cross-link. Inhibitory regions lie at residues 704-709 (RVGFYE), 719-723 (RLVHV), and 730-735 (TVRKYF). N-linked (GlcNAc...) asparagine glycosylation is present at Asn869. The isoglutamyl cysteine thioester (Cys-Gln) cross-link spans 972–975 (CGEQ). An N-linked (GlcNAc...) asparagine glycan is attached at Asn991. Asn1424 is a glycosylation site (N-linked (GlcNAc...) (complex) asparagine).

It belongs to the protease inhibitor I39 (alpha-2-macroglobulin) family. In terms of assembly, homotetramer; disulfide-linked. Secreted in plasma.

It is found in the secreted. Functionally, is able to inhibit all four classes of proteinases by a unique 'trapping' mechanism. This protein has a peptide stretch, called the 'bait region' which contains specific cleavage sites for different proteinases. When a proteinase cleaves the bait region, a conformational change is induced in the protein which traps the proteinase. The entrapped enzyme remains active against low molecular weight substrates (activity against high molecular weight substrates is greatly reduced). Following cleavage in the bait region, a thioester bond is hydrolyzed and mediates the covalent binding of the protein to the proteinase. This chain is Alpha-2-macroglobulin (A2M), found in Homo sapiens (Human).